A 383-amino-acid chain; its full sequence is MSVVGIIAEFNPFHSGHEFLLNQARLIAGNDPIVVVMSGNYVQRGEMAIMSKYQRAKVALQSGADLVFETPFSTAVEPADLFSLGNIEQLAKLGVTDLVFGVENANLNFAYLGSKIAEIPQNHMDFKDYSQTYSTQYNQMVAREVGHEVNQPNAILGLAYAVANHNLGSPLKLHPVNRIGAGHDDLLQRNGVVQSASAIRNLLLHGEDTSNLKYWVPKAEAIELSKQEIYPNWNLLYPFLKYRIESSSIDDLRQIYQMSEGLEYKMKQEIHLSRDFTEFLRRIKSKRYTYSRLRRLSLYTLLNVTQDDMIASFNEESLMLLGFSKTGRQYLKKNRKDFQTEIISKVDKRSAKSGSLALQVRTDRLFEQIMGVDQNFGQRPIEV.

ATP contacts are provided by residues 7 to 20 (IAEFNPFHSGHEFL), Gly-101, Asn-153, and 178 to 179 (RI).

Belongs to the TmcAL family.

Its subcellular location is the cytoplasm. It carries out the reaction cytidine(34) in elongator tRNA(Met) + acetate + ATP = N(4)-acetylcytidine(34) in elongator tRNA(Met) + AMP + diphosphate. In terms of biological role, catalyzes the formation of N(4)-acetylcytidine (ac(4)C) at the wobble position of elongator tRNA(Met), using acetate and ATP as substrates. First activates an acetate ion to form acetyladenylate (Ac-AMP) and then transfers the acetyl group to tRNA to form ac(4)C34. This Lactobacillus helveticus (strain DPC 4571) protein is tRNA(Met) cytidine acetate ligase.